Here is a 507-residue protein sequence, read N- to C-terminus: Alkyl hydroperoxide reductase subunit F (507 aa).

207 to 222 (DVLIVGGGPASGSAAI) provides a ligand contact to FAD. Residues C335 and C338 are joined by a disulfide bond. 347–361 (DVAVIGGGNSGVEAA) contacts NAD(+). 467 to 477 (TNVPGIFAAGD) serves as a coordination point for FAD.

It belongs to the class-II pyridine nucleotide-disulfide oxidoreductase family. Homodimer. It depends on FAD as a cofactor.

Functionally, serves to protect the cell against DNA damage by alkyl hydroperoxides. It can use either NADH or NADPH as electron donor for direct reduction of redox dyes or of alkyl hydroperoxides when combined with the AhpC protein. This Staphylococcus aureus (strain MSSA476) protein is Alkyl hydroperoxide reductase subunit F (ahpF).